The chain runs to 270 residues: Energy-coupling factor transporter transmembrane protein EcfT (270 aa).

The next 4 membrane-spanning stretches (helical) occupy residues 36–56 (LFIVNSFKGYIFIVVFTLISI), 72–92 (PIFILVLITAVLNIFMTGGAN), 108–128 (LIMAAFMALRLVFLIIGTSLL), and 248–268 (FIASLCALVLVCISILSRIWW).

The protein belongs to the energy-coupling factor EcfT family. In terms of assembly, forms a stable energy-coupling factor (ECF) transporter complex composed of 2 membrane-embedded substrate-binding proteins (S component), 2 ATP-binding proteins (A component) and 2 transmembrane proteins (T component). May be able to interact with more than 1 S component at a time.

Its subcellular location is the cell membrane. Functionally, transmembrane (T) component of an energy-coupling factor (ECF) ABC-transporter complex. Unlike classic ABC transporters this ECF transporter provides the energy necessary to transport a number of different substrates. This is Energy-coupling factor transporter transmembrane protein EcfT from Clostridium kluyveri (strain ATCC 8527 / DSM 555 / NBRC 12016 / NCIMB 10680 / K1).